The sequence spans 345 residues: MNPIINFILLFSMMAGTILAMTSHHWVYAWLGLELNTLAIIPIISKTHHPRATEASTKYFLIQAISSALFLLSGITNAYLYGTWDINHLSNNFSKILLTIALATKLGLAPVHFWLPEVLQGVPILTALIIATWQKVAPMALLIMTWNLIPTPITLTMGLLSTIIGGLGGLNQTPLRKMMAYSSIAHLGWMVIIITIAPNLTLLNLTLYMIFTSSAMLTMHLTISKTLQNAMHISHHSPIITSLFLLSLLSLGGLPPMSGFSPKWLILQELTLHHLTPLALSMALMALLSLMFYLRATYISTMTLSPSIITLKTTWRLKSVSTTSSLSMLTPPSLLILPIMPLLIQ.

A run of 9 helical transmembrane segments spans residues 1-21 (MNPI…ILAM), 25-45 (HWVY…PIIS), 60-80 (FLIQ…NAYL), 113-133 (FWLP…IATW), 148-168 (LIPT…GGLG), 191-211 (VIII…YMIF), 239-259 (IITS…PMSG), 274-294 (HLTP…MFYL), and 324-344 (SSLS…PLLI).

The protein belongs to the complex I subunit 2 family.

It localises to the mitochondrion inner membrane. The enzyme catalyses a ubiquinone + NADH + 5 H(+)(in) = a ubiquinol + NAD(+) + 4 H(+)(out). Functionally, core subunit of the mitochondrial membrane respiratory chain NADH dehydrogenase (Complex I) that is believed to belong to the minimal assembly required for catalysis. Complex I functions in the transfer of electrons from NADH to the respiratory chain. The immediate electron acceptor for the enzyme is believed to be ubiquinone. The chain is NADH-ubiquinone oxidoreductase chain 2 (MT-ND2) from Varanus baritji (Black-spotted ridge-tailed monitor).